Reading from the N-terminus, the 130-residue chain is Early 3 receptor internalization and degradation beta protein (130 aa).

The first 19 residues, 1–19 (MKRSVIFVLLIFCALPVLC), serve as a signal peptide directing secretion. A helical transmembrane segment spans residues 53-77 (AWLYAIISVMVFCSTIFALAIYPYL). A tyrosine-based sorting motif region spans residues 122-125 (YFNL).

It belongs to the adenoviridae E3_RID-beta family. As to quaternary structure, interacts with E3 RID-alpha and E3 CR1-alpha. Post-translationally, phosphorylated on serine. O-glycosylated, but not N-glycosylated.

It is found in the host membrane. Prevents infected cell apoptosis induced by the host immune system. Acts by down-regulating a number of cell surface receptors in the tumor necrosis factor (TNF) receptor superfamily, namely FAS, TNFRSF10A/TRAIL receptor 1, and TNFRSF10B/TRAIL receptor 2. Down-regulation of these death receptors protects adenovirus-infected cells from apoptosis induced by the death receptor ligands Fas ligand and TRAIL. RID complex also down-regulates certain tyrosine kinase cell surface receptors, especially the epidermal growth factor receptor (EGFR). RID-mediated Fas and EGFR down-regulation occurs via endocytosis of the receptors into endosomes followed by transport to and degradation within lysosomes. In Human adenovirus C serotype 2 (HAdV-2), this protein is Early 3 receptor internalization and degradation beta protein.